A 317-amino-acid chain; its full sequence is Beta-sarcoglycan (317 aa).

Residues 1–31 are disordered; the sequence is MAAAAAATEQQSSNGPVKKSMREKAVERRNV. Residues 1–64 lie on the Cytoplasmic side of the membrane; it reads MAAAAAATEQ…GLRGRKGNLA (64 aa). The span at 20 to 31 shows a compositional bias: basic and acidic residues; it reads SMREKAVERRNV. The helical; Signal-anchor for type II membrane protein transmembrane segment at 65 to 85 threads the bilayer; the sequence is ICVIVLLFILAVINLIITLVI. Topologically, residues 86–317 are extracellular; the sequence is WAVIRIGPNG…TSDNPCGDLY (232 aa). N-linked (GlcNAc...) asparagine glycosylation is found at Asn-157, Asn-210, and Asn-257. 2 cysteine pairs are disulfide-bonded: Cys-287–Cys-313 and Cys-289–Cys-306.

This sequence belongs to the sarcoglycan beta/delta/gamma/zeta family. As to quaternary structure, cross-link to form 2 major subcomplexes: one consisting of SGCB, SGCD and SGCG and the other consisting of SGCB and SGCD. The association between SGCB and SGCG is particularly strong while SGCA is loosely associated with the other sarcoglycans. Post-translationally, disulfide bonds are present.

It is found in the cell membrane. The protein resides in the sarcolemma. It localises to the cytoplasm. The protein localises to the cytoskeleton. Its function is as follows. Component of the sarcoglycan complex, a subcomplex of the dystrophin-glycoprotein complex which forms a link between the F-actin cytoskeleton and the extracellular matrix. The sequence is that of Beta-sarcoglycan (SGCB) from Bos taurus (Bovine).